We begin with the raw amino-acid sequence, 255 residues long: Cullin-like protein 3 (255 aa).

Belongs to the cullin family.

In Arabidopsis thaliana (Mouse-ear cress), this protein is Cullin-like protein 3.